Consider the following 222-residue polypeptide: V-type ATP synthase subunit D (222 aa).

It belongs to the V-ATPase D subunit family.

In terms of biological role, produces ATP from ADP in the presence of a proton gradient across the membrane. This chain is V-type ATP synthase subunit D, found in Deinococcus geothermalis (strain DSM 11300 / CIP 105573 / AG-3a).